Reading from the N-terminus, the 179-residue chain is Ribosome maturation factor RimM (179 aa).

The PRC barrel domain occupies 95–174; the sequence is KDEFFYFDIL…QIFCTQDAFL (80 aa).

The protein belongs to the RimM family. Binds ribosomal protein uS19.

The protein localises to the cytoplasm. An accessory protein needed during the final step in the assembly of 30S ribosomal subunit, possibly for assembly of the head region. Essential for efficient processing of 16S rRNA. May be needed both before and after RbfA during the maturation of 16S rRNA. It has affinity for free ribosomal 30S subunits but not for 70S ribosomes. This Campylobacter jejuni subsp. jejuni serotype O:2 (strain ATCC 700819 / NCTC 11168) protein is Ribosome maturation factor RimM.